Here is a 139-residue protein sequence, read N- to C-terminus: Gastrula zinc finger protein XlCGF67.1 (139 aa).

C2H2-type zinc fingers lie at residues 6–28 (VSCP…KKVH), 33–55 (YSCS…LRTH), 61–83 (YSCS…KRIH), 89–111 (FSCQ…QKIH), and 117–139 (FSCS…SRIH).

The protein belongs to the krueppel C2H2-type zinc-finger protein family.

It is found in the nucleus. Functionally, may be involved in transcriptional regulation. The chain is Gastrula zinc finger protein XlCGF67.1 from Xenopus laevis (African clawed frog).